A 107-amino-acid chain; its full sequence is Nucleoid-associated protein BMEA_A0033 (107 aa).

This sequence belongs to the YbaB/EbfC family. As to quaternary structure, homodimer.

Its subcellular location is the cytoplasm. The protein localises to the nucleoid. Binds to DNA and alters its conformation. May be involved in regulation of gene expression, nucleoid organization and DNA protection. The protein is Nucleoid-associated protein BMEA_A0033 of Brucella melitensis biotype 2 (strain ATCC 23457).